The following is a 114-amino-acid chain: MKKHLTTFLVILWLYFYRGNGKNQVEQSPQSLIILEGKNCTLQCNYTVSPFSNLRWYKQDTGRGPVSLTIMTFSENTKSNGRYTATLDADTKQSSLHITASQLSDSASYICVVS.

A signal peptide spans 1-21 (MKKHLTTFLVILWLYFYRGNG). In terms of domain architecture, Ig-like spans 23–114 (NQVEQSPQSL…DSASYICVVS (92 aa)). N-linked (GlcNAc...) asparagine glycosylation is found at Asn-39 and Asn-45. Cys-44 and Cys-111 are oxidised to a cystine.

Alpha-beta TR is a heterodimer composed of an alpha and beta chain; disulfide-linked. The alpha-beta TR is associated with the transmembrane signaling CD3 coreceptor proteins to form the TR-CD3 (TcR or TCR). The assembly of alpha-beta TR heterodimers with CD3 occurs in the endoplasmic reticulum where a single alpha-beta TR heterodimer associates with one CD3D-CD3E heterodimer, one CD3G-CD3E heterodimer and one CD247 homodimer forming a stable octameric structure. CD3D-CD3E and CD3G-CD3E heterodimers preferentially associate with TR alpha and TR beta chains, respectively. The association of the CD247 homodimer is the last step of TcR assembly in the endoplasmic reticulum and is required for transport to the cell surface.

Its subcellular location is the cell membrane. In terms of biological role, v region of the variable domain of T cell receptor (TR) alpha chain that participates in the antigen recognition. Alpha-beta T cell receptors are antigen specific receptors which are essential to the immune response and are present on the cell surface of T lymphocytes. Recognize peptide-major histocompatibility (MH) (pMH) complexes that are displayed by antigen presenting cells (APC), a prerequisite for efficient T cell adaptive immunity against pathogens. Binding of alpha-beta TR to pMH complex initiates TR-CD3 clustering on the cell surface and intracellular activation of LCK that phosphorylates the ITAM motifs of CD3G, CD3D, CD3E and CD247 enabling the recruitment of ZAP70. In turn ZAP70 phosphorylates LAT, which recruits numerous signaling molecules to form the LAT signalosome. The LAT signalosome propagates signal branching to three major signaling pathways, the calcium, the mitogen-activated protein kinase (MAPK) kinase and the nuclear factor NF-kappa-B (NF-kB) pathways, leading to the mobilization of transcription factors that are critical for gene expression and essential for T cell growth and differentiation. The T cell repertoire is generated in the thymus, by V-(D)-J rearrangement. This repertoire is then shaped by intrathymic selection events to generate a peripheral T cell pool of self-MH restricted, non-autoaggressive T cells. Post-thymic interaction of alpha-beta TR with the pMH complexes shapes TR structural and functional avidity. The chain is T cell receptor alpha variable 10 from Homo sapiens (Human).